The following is a 143-amino-acid chain: MRHGKAGRKLNRTSSHRKAMFANMAASLIEHEQIVTTLPKAKELRPIVEKLVTLGKRGDLHARRQAIAAIRSETLVRRLFDTLAPRYASRNGGYTRIMKAGFRHGDNAAMAVIEFVDRDPSVKGAADRARVEAEAANEEAEAA.

The protein belongs to the bacterial ribosomal protein bL17 family. Part of the 50S ribosomal subunit. Contacts protein L32.

This is Large ribosomal subunit protein bL17 from Chelativorans sp. (strain BNC1).